Consider the following 1293-residue polypeptide: Period circadian protein homolog 1 (1293 aa).

The tract at residues 1-134 (MSGPLEGADG…SSEQSARART (134 aa)) is disordered. Residues 1-151 (MSGPLEGADG…LRELKLRLPP (151 aa)) form an interaction with BTRC region. Composition is skewed to low complexity over residues 48–57 (NSNGSSGNES) and 64–115 (GASQ…ASSE). Polar residues predominate over residues 116–132 (QDNPSTSGCSSEQSARA). Residue threonine 121 is modified to Phosphothreonine; by CSNK1E. Phosphoserine; by CSNK1E occurs at positions 122 and 126. Positions 138-147 (LMTALRELKL) match the Nuclear export signal 1 motif. PAS domains are found at residues 208–275 (ITSE…PSRL) and 348–414 (YEAP…KILQ). Residues 422 to 465 (HSPIRFCARNGEYVTMDTSWAGFVHPWSRKVAFVLGRHKVRTAP) form the PAC domain. A Nuclear export signal 2 motif is present at residues 489–498 (LSEQIHRLLL). 2 disordered regions span residues 509 to 544 (LCGV…PAPV) and 647 to 697 (TKRK…KEPV). Low complexity-rich tracts occupy residues 513–533 (GPLM…SNGG) and 652–661 (ASSSCTASSA). Residues 596 to 814 (ELEVAPAPDQ…GLDTSSVAPS (219 aa)) form a required for phosphorylation by CSNK1E region. A phosphoserine mark is found at serine 660, serine 662, and serine 703. Disordered regions lie at residues 748 to 771 (GLAP…APDA), 808 to 870 (TSSV…PPAT), 935 to 1094 (SQAP…SKYF), and 1204 to 1293 (SVQD…NGTS). Residues 750–768 (APGPAPSPAPSPTVAPDPA) are compositionally biased toward pro residues. The residue at position 814 (serine 814) is a Phosphoserine. The short motif at 823–839 (IPSGRRHHCRSKAKRSR) is the Nuclear localization signal element. Basic residues predominate over residues 826–843 (GRRHHCRSKAKRSRHHQT). Pro residues-rich tracts occupy residues 856–870 (SPVP…PPAT) and 952–962 (PSLPPPPPSPP). Residues 969–982 (LFNSRCSSPLQLNL) show a composition bias toward polar residues. Serine 975 and serine 976 each carry phosphoserine. Positions 978–985 (LQLNLLQL) match the Nuclear export signal 3 motif. Positions 1032 to 1058 (LSGSSDLLELLLQEDSRSGTGSAASGS) are enriched in low complexity. Positions 1039-1043 (LELLL) match the LXXLL motif. The span at 1059 to 1073 (LGSGLGSGSGSGSHE) shows a compositional bias: gly residues. Residues 1074-1091 (GGSTSASITRSSQSSHTS) show a composition bias toward low complexity. The tract at residues 1145–1293 (SRDAASVLKQ…ALPAEENGTS (149 aa)) is CRY binding domain. Positions 1232 to 1250 (GEGGGVGGGGGGVGGGGGD) are enriched in gly residues. Over residues 1255–1269 (AQTQIGTKGSSSQDS) the composition is skewed to polar residues.

In terms of assembly, homodimer. Component of the circadian core oscillator, which includes the CRY proteins, CLOCK or NPAS2, BMAL1 or BMAL2, CSNK1D and/or CSNK1E, TIMELESS, and the PER proteins. Interacts directly with TIMELESS, PER2, PER3, CRY1 and CRY2. Interacts with BMAL1 and CLOCK. Interacts with GPRASP1. Interacts (phosphorylated) with BTRC and FBXW11; the interactions trigger proteasomal degradation. Interacts with NONO and WDR5. Interacts with SFPQ. Interacts with USP2. Interacts with HNF4A. Phosphorylated on serine residues by CSNK1D, CSNK1E and probably also by CSNK1G2. Phosphorylation by CSNK1D or CSNK1E promotes nuclear location of PER proteins as well as ubiquitination and subsequent degradation. May be dephosphorylated by PP1. In terms of processing, ubiquitinated; requires phosphorylation by CSNK1E and interaction with BTRC and FBXW11. Deubiquitinated by USP2. As to expression, expressed in pancreas. In the CNS, highly expressed in the SCN, internal granular layer of granular cells of the olfactory bulb, tuberculum olfactorium, piriform cortex, gyrus dentatus of the hippocampus, cerebellum, pars tuberalis/median eminence, and pituitary, and moderately in the tenia tecta, caudate putamen, accumbens nucleus, spinal cord, superior and inferior colliculus and pineal gland.

The protein resides in the nucleus. The protein localises to the cytoplasm. Its function is as follows. Transcriptional repressor which forms a core component of the circadian clock. The circadian clock, an internal time-keeping system, regulates various physiological processes through the generation of approximately 24 hour circadian rhythms in gene expression, which are translated into rhythms in metabolism and behavior. It is derived from the Latin roots 'circa' (about) and 'diem' (day) and acts as an important regulator of a wide array of physiological functions including metabolism, sleep, body temperature, blood pressure, endocrine, immune, cardiovascular, and renal function. Consists of two major components: the central clock, residing in the suprachiasmatic nucleus (SCN) of the brain, and the peripheral clocks that are present in nearly every tissue and organ system. Both the central and peripheral clocks can be reset by environmental cues, also known as Zeitgebers (German for 'timegivers'). The predominant Zeitgeber for the central clock is light, which is sensed by retina and signals directly to the SCN. The central clock entrains the peripheral clocks through neuronal and hormonal signals, body temperature and feeding-related cues, aligning all clocks with the external light/dark cycle. Circadian rhythms allow an organism to achieve temporal homeostasis with its environment at the molecular level by regulating gene expression to create a peak of protein expression once every 24 hours to control when a particular physiological process is most active with respect to the solar day. Transcription and translation of core clock components (CLOCK, NPAS2, BMAL1, BMAL2, PER1, PER2, PER3, CRY1 and CRY2) plays a critical role in rhythm generation, whereas delays imposed by post-translational modifications (PTMs) are important for determining the period (tau) of the rhythms (tau refers to the period of a rhythm and is the length, in time, of one complete cycle). A diurnal rhythm is synchronized with the day/night cycle, while the ultradian and infradian rhythms have a period shorter and longer than 24 hours, respectively. Disruptions in the circadian rhythms contribute to the pathology of cardiovascular diseases, cancer, metabolic syndromes and aging. A transcription/translation feedback loop (TTFL) forms the core of the molecular circadian clock mechanism. Transcription factors, CLOCK or NPAS2 and BMAL1 or BMAL2, form the positive limb of the feedback loop, act in the form of a heterodimer and activate the transcription of core clock genes and clock-controlled genes (involved in key metabolic processes), harboring E-box elements (5'-CACGTG-3') within their promoters. The core clock genes: PER1/2/3 and CRY1/2 which are transcriptional repressors form the negative limb of the feedback loop and interact with the CLOCK|NPAS2-BMAL1|BMAL2 heterodimer inhibiting its activity and thereby negatively regulating their own expression. This heterodimer also activates nuclear receptors NR1D1/2 and RORA/B/G, which form a second feedback loop and which activate and repress BMAL1 transcription, respectively. Regulates circadian target genes expression at post-transcriptional levels, but may not be required for the repression at transcriptional level. Controls PER2 protein decay. Represses CRY2 preventing its repression on CLOCK/BMAL1 target genes such as FXYD5 and SCNN1A in kidney and PPARA in liver. Besides its involvement in the maintenance of the circadian clock, has an important function in the regulation of several processes. Participates in the repression of glucocorticoid receptor NR3C1/GR-induced transcriptional activity by reducing the association of NR3C1/GR to glucocorticoid response elements (GREs) by BMAL1:CLOCK. Plays a role in the modulation of the neuroinflammatory state via the regulation of inflammatory mediators release, such as CCL2 and IL6. In spinal astrocytes, negatively regulates the MAPK14/p38 and MAPK8/JNK MAPK cascades as well as the subsequent activation of NFkappaB. Coordinately regulates the expression of multiple genes that are involved in the regulation of renal sodium reabsorption. Can act as gene expression activator in a gene and tissue specific manner, in kidney enhances WNK1 and SLC12A3 expression in collaboration with CLOCK. Modulates hair follicle cycling. Represses the CLOCK-BMAL1 induced transcription of BHLHE40/DEC1. The sequence is that of Period circadian protein homolog 1 from Rattus norvegicus (Rat).